The sequence spans 223 residues: Glucosyl-3-phosphoglycerate phosphatase (223 aa).

Arg-10 contributes to the substrate binding site. His-11 acts as the Tele-phosphohistidine intermediate in catalysis. An Isoglutamyl lysine isopeptide (Lys-Gln) (interchain with Q-Cter in protein Pup) cross-link involves residue Lys-47. Residue Arg-60 participates in substrate binding. Glu-84 serves as the catalytic Proton donor/acceptor. Substrate is bound at residue His-159.

It belongs to the phosphoglycerate mutase family. As to quaternary structure, homodimer. Dimerization of the enzyme is essential for its dephosphorylation activity.

It carries out the reaction (2R)-2-O-(alpha-D-glucopyranosyl)-3-phospho-glycerate + H2O = (2R)-2-O-(alpha-D-glucopyranosyl)-glycerate + phosphate. The catalysed reaction is 2-O-(alpha-D-mannosyl)-3-phosphoglycerate + H2O = (2R)-2-O-(alpha-D-mannosyl)-glycerate + phosphate. The enzyme catalyses (2R)-2-O-[alpha-D-mannopyranosyl-(1-&gt;2)-alpha-D-glucopyranosyl]-3-phospho-glycerate + H2O = (2R)-2-O-[alpha-D-mannopyranosyl-(1-&gt;2)-alpha-D-glucopyranosyl]-glycerate + phosphate. With respect to regulation, progressively inhibited by cobalt ions at concentrations between 10-50 mM and by copper ions at any concentration between 1-50 mM. Functionally, involved in the biosynthesis of mycobacterial methylglucose lipopolysaccharides (MGLPs). Catalyzes the dephosphorylation of glucosyl-3-phosphoglycerate (GPG) to glucosylglycerate (GG). GPG is the preferred substrate, but GpgP also exhibits low dephosphorylation activity on mannosyl-3-phosphoglycerate (MPG) and mannosylglucosyl-3-phosphoglycerate (MGPG) in vitro. Shows only trace of phosphoglycerate mutase (PGM) activity. The sequence is that of Glucosyl-3-phosphoglycerate phosphatase from Mycobacterium tuberculosis (strain ATCC 25618 / H37Rv).